The following is a 542-amino-acid chain: Putative beta-glucosidase 23 (542 aa).

The N-terminal stretch at 1 to 29 (MAACTSSLVSLLLLLLLLLLLLVAGEATA) is a signal peptide. Asn-34 carries an N-linked (GlcNAc...) asparagine glycan. Gln-88 lines the a beta-D-glucoside pocket. N-linked (GlcNAc...) asparagine glycosylation occurs at Asn-135. Residue His-216 participates in a beta-D-glucoside binding. The Proton donor role is filled by Glu-262. A disulfide bridge connects residues Cys-281 and Cys-289. Tyr-405 is an a beta-D-glucoside binding site. Asn-445 carries an N-linked (GlcNAc...) asparagine glycan. 2 residues coordinate a beta-D-glucoside: Trp-476 and Phe-492.

Belongs to the glycosyl hydrolase 1 family.

It catalyses the reaction Hydrolysis of terminal, non-reducing beta-D-glucosyl residues with release of beta-D-glucose.. In Oryza sativa subsp. japonica (Rice), this protein is Putative beta-glucosidase 23 (BGLU23).